Here is a 198-residue protein sequence, read N- to C-terminus: MSTPRVLPQSKETLLQNYNKRLKDDIRSILDNFTEIIKTAKVEDETQVSRATQAEQDHFEMHVRAANIVRAGESLMKLVSDLKQFLILNDFPSVNEAISLRNQQLRTLQEECDKKLISLRDEIAIDLYELEEEYYSSSCGQWDGVELPLCEAFHRQDSWGSPEMTSDPSHANHEVSDHLGSQESMQRHRNGSGTSEQS.

The disordered stretch occupies residues 159–198 (WGSPEMTSDPSHANHEVSDHLGSQESMQRHRNGSGTSEQS).

Belongs to the Mediator complex subunit 22 family. In terms of assembly, component of the Mediator complex.

The protein resides in the nucleus. Component of the Mediator complex, a coactivator involved in the regulated transcription of nearly all RNA polymerase II-dependent genes. Mediator functions as a bridge to convey information from gene-specific regulatory proteins to the basal RNA polymerase II transcription machinery. Mediator is recruited to promoters by direct interactions with regulatory proteins and serves as a scaffold for the assembly of a functional preinitiation complex with RNA polymerase II and the general transcription factors. This Danio rerio (Zebrafish) protein is Mediator of RNA polymerase II transcription subunit 22 (med22).